The chain runs to 638 residues: Pentatricopeptide repeat-containing protein At1g59720, chloroplastic/mitochondrial (638 aa).

Residues 1 to 40 (MVVRSIIVSPPTTITYYHPMSIGLLVHPLSPHIPPASSPS) constitute a chloroplast and mitochondrion transit peptide. PPR repeat units follow at residues 82 to 112 (TLFLYGKILQLSSSFSDVNYAFRVFDSIENH), 113 to 148 (SSFMWNTLIRACAHDVSRKEEAFMLYRKMLERGESS), 150 to 184 (DKHTFPFVLKACAYIFGFSEGKQVHCQIVKHGFGG), 185 to 215 (DVYVNNGLIHLYGSCGCLDLARKVFDEMPER), 216 to 246 (SLVSWNSMIDALVRFGEYDSALQLFREMQRS), 250 to 280 (DGYTMQSVLSACAGLGSLSLGTWAHAFLLRK), 288 to 318 (DVLVKNSLIEMYCKCGSLRMAEQVFQGMQKR), 319 to 353 (DLASWNAMILGFATHGRAEEAMNFFDRMVDKRENV), 356 to 390 (NSVTFVGLLIACNHRGFVNKGRQYFDMMVRDYCIE), and 392 to 422 (ALEHYGCIVDLIARAGYITEAIDMVMSMPMK). The segment at 427–510 (IWRSLLDACC…EPGCSSIEIN (84 aa)) is type E motif. The interval 511 to 541 (GISHEFFAGDTSHPQTKQIYQQLKVIDDRLR) is type E(+) motif. The interval 542–638 (SIGYLPDRSQ…DGSCSCLDYW (97 aa)) is type DYW motif.

The protein belongs to the PPR family. PCMP-H subfamily. As to quaternary structure, interacts with ORRM1. Interacts with VAR3/OZ1.

Its subcellular location is the plastid. The protein localises to the chloroplast. The protein resides in the mitochondrion. Its function is as follows. Involved in multiple sites RNA editing events in chloroplasts. Involved in the editing of the site 2 of ndhB (ndhB-2) and site 3 of ndhD (ndhD-3) transcripts, which are two plastid-encoded subunits of the chloroplast NAD(P)H dehydrogenase (NDH) complex. Required for the activity of the NDH complex of the photosynthetic electron transport chain. The sequence is that of Pentatricopeptide repeat-containing protein At1g59720, chloroplastic/mitochondrial (PCMP-H51) from Arabidopsis thaliana (Mouse-ear cress).